The primary structure comprises 158 residues: 2-C-methyl-D-erythritol 2,4-cyclodiphosphate synthase (158 aa).

Positions 8 and 10 each coordinate a divalent metal cation. 4-CDP-2-C-methyl-D-erythritol 2-phosphate contacts are provided by residues Asp-8–His-10 and His-34–Ser-35. His-42 contributes to the a divalent metal cation binding site. 4-CDP-2-C-methyl-D-erythritol 2-phosphate is bound by residues Asp-56–Gly-58, Thr-132–Glu-135, and Arg-142.

Belongs to the IspF family. As to quaternary structure, homotrimer. It depends on a divalent metal cation as a cofactor.

The enzyme catalyses 4-CDP-2-C-methyl-D-erythritol 2-phosphate = 2-C-methyl-D-erythritol 2,4-cyclic diphosphate + CMP. It participates in isoprenoid biosynthesis; isopentenyl diphosphate biosynthesis via DXP pathway; isopentenyl diphosphate from 1-deoxy-D-xylulose 5-phosphate: step 4/6. Involved in the biosynthesis of isopentenyl diphosphate (IPP) and dimethylallyl diphosphate (DMAPP), two major building blocks of isoprenoid compounds. Catalyzes the conversion of 4-diphosphocytidyl-2-C-methyl-D-erythritol 2-phosphate (CDP-ME2P) to 2-C-methyl-D-erythritol 2,4-cyclodiphosphate (ME-CPP) with a corresponding release of cytidine 5-monophosphate (CMP). This Nitrosococcus oceani (strain ATCC 19707 / BCRC 17464 / JCM 30415 / NCIMB 11848 / C-107) protein is 2-C-methyl-D-erythritol 2,4-cyclodiphosphate synthase.